The primary structure comprises 384 residues: Substance-K receptor (384 aa).

Over 1 to 32 (MGAHASVTDTNILSGLESNATGVTAFSMPGWQ) the chain is Extracellular. Asn-19 is a glycosylation site (N-linked (GlcNAc...) asparagine). Residues 33–56 (LALWATAYLALVLVAVTGNATVIW) traverse the membrane as a helical segment. Topologically, residues 57–69 (IILAHERMRTVTN) are cytoplasmic. The chain crosses the membrane as a helical span at residues 70–90 (YFIINLALADLCMAAFNATFN). The Extracellular segment spans residues 91 to 107 (FIYASHNIWYFGSTFCY). Residues Cys-106 and Cys-181 are joined by a disulfide bond. The helical transmembrane segment at 108 to 129 (FQNLFPVTAMFVSIYSMTAIAA) threads the bilayer. At 130 to 149 (DRYMAIVHPFQPRLSAPSTK) the chain is on the cytoplasmic side. Residues 150-170 (AVIAVIWLVALALASPQCFYS) traverse the membrane as a helical segment. The Extracellular segment spans residues 171–196 (TITVDQGATKCVVAWPNDNGGKMLLL). A helical membrane pass occupies residues 197 to 218 (YHLVVFVLIYFLPLVVMFAAYS). The Cytoplasmic portion of the chain corresponds to 219–251 (VIGLTLWKRAVPRHQAHGANLRHLQAKKKFVKA). The helical transmembrane segment at 252 to 272 (MVLVVVTFAICWLPYHLYFIL) threads the bilayer. The Extracellular segment spans residues 273–290 (GTFQEDIYYRKFIQQVYL). Residues 291–310 (ALFWLAMSSTMYNPIIYCCL) form a helical membrane-spanning segment. The Cytoplasmic segment spans residues 311 to 384 (NHRFRSGFRL…GPQDGEPAGP (74 aa)). Residue Cys-324 is the site of S-palmitoyl cysteine attachment. Residues 365–384 (HSEATNGQVGGPQDGEPAGP) form a disordered region.

The protein belongs to the G-protein coupled receptor 1 family.

The protein localises to the cell membrane. Functionally, this is a receptor for the tachykinin neuropeptide substance K (neurokinin A). It is associated with G proteins that activate a phosphatidylinositol-calcium second messenger system. The rank order of affinity of this receptor to tachykinins is: substance K &gt; neuromedin-K &gt; substance P. The sequence is that of Substance-K receptor (Tacr2) from Mus musculus (Mouse).